We begin with the raw amino-acid sequence, 371 residues long: Putative glutamate--cysteine ligase 2 (371 aa).

The protein belongs to the glutamate--cysteine ligase type 2 family. YbdK subfamily.

The enzyme catalyses L-cysteine + L-glutamate + ATP = gamma-L-glutamyl-L-cysteine + ADP + phosphate + H(+). Functionally, ATP-dependent carboxylate-amine ligase which exhibits weak glutamate--cysteine ligase activity. This is Putative glutamate--cysteine ligase 2 from Burkholderia thailandensis (strain ATCC 700388 / DSM 13276 / CCUG 48851 / CIP 106301 / E264).